The primary structure comprises 287 residues: Pyridoxal kinase PdxY (287 aa).

Residues serine 9 and 44 to 45 (MQ) contribute to the substrate site. Aspartate 111, alanine 142, glutamate 147, and lysine 180 together coordinate ATP. Position 221 (aspartate 221) interacts with substrate.

This sequence belongs to the pyridoxine kinase family. PdxY subfamily. As to quaternary structure, homodimer. Mg(2+) is required as a cofactor.

It catalyses the reaction pyridoxal + ATP = pyridoxal 5'-phosphate + ADP + H(+). The protein operates within cofactor metabolism; pyridoxal 5'-phosphate salvage; pyridoxal 5'-phosphate from pyridoxal: step 1/1. Its function is as follows. Pyridoxal kinase involved in the salvage pathway of pyridoxal 5'-phosphate (PLP). Catalyzes the phosphorylation of pyridoxal to PLP. In Burkholderia pseudomallei (strain K96243), this protein is Pyridoxal kinase PdxY.